A 381-amino-acid polypeptide reads, in one-letter code: Opsin-1 (381 aa).

Over 1 to 53 the chain is Extracellular; sequence MASASLISEPSFSAYWGGSGGFANQTVVDKVPPEMLYLVDPHWYQFPPMNPLW. The N-linked (GlcNAc...) asparagine glycan is linked to Asn-24. Residues 54 to 78 traverse the membrane as a helical segment; that stretch reads HGLLGFVIGVLGVISVIGNGMVIYI. Residues 79-90 lie on the Cytoplasmic side of the membrane; sequence FSTTKSLRTPSN. Residues 91-115 traverse the membrane as a helical segment; the sequence is LLVVNLAFSDFLMMFTMSAPMGINC. The Extracellular portion of the chain corresponds to 116–130; it reads YYETWVLGPFMCELY. Cys-127 and Cys-204 are joined by a disulfide. The chain crosses the membrane as a helical span at residues 131–150; it reads ALFGSLFGCGSIWTMTMIAL. Residues 151-169 are Cytoplasmic-facing; the sequence is DRYNVIVKGLSAKPMTNKT. The helical transmembrane segment at 170 to 193 threads the bilayer; the sequence is AMLRILFIWAFSVAWTIMPLFGWN. At 194 to 217 the chain is on the extracellular side; sequence RYVPEGNMTACGTDYLTKDWVSRS. Residue Asn-200 is glycosylated (N-linked (GlcNAc...) asparagine). Residues 218 to 245 traverse the membrane as a helical segment; the sequence is YILVYSFFVYLLPLGTIIYSYFFILQAV. Topologically, residues 246–280 are cytoplasmic; that stretch reads SAHEKQMREQRKKMNVASLRSAEASQTSAECKLAK. Residues 281-304 traverse the membrane as a helical segment; sequence VALMTISLWFFGWTPYLIINFTGI. Residues 305-311 are Extracellular-facing; the sequence is FETMKIS. Residues 312–336 traverse the membrane as a helical segment; sequence PLLTIWGSLFAKANAVFNPIVYGIS. Lys-323 is subject to N6-(retinylidene)lysine. Over 337-381 the chain is Cytoplasmic; the sequence is HPKYRAALEKKFPSLACASSSDDNTSVASGATTVSDEKSEKSASA. Residues 354–370 are compositionally biased toward polar residues; it reads ASSSDDNTSVASGATTV. A disordered region spans residues 354–381; that stretch reads ASSSDDNTSVASGATTVSDEKSEKSASA. Positions 371 to 381 are enriched in basic and acidic residues; the sequence is SDEKSEKSASA.

This sequence belongs to the G-protein coupled receptor 1 family. Opsin subfamily. In terms of processing, phosphorylated on some or all of the serine and threonine residues present in the C-terminal region.

It is found in the cell projection. It localises to the rhabdomere membrane. Functionally, visual pigments are the light-absorbing molecules that mediate vision. They consist of an apoprotein, opsin, covalently linked to cis-retinal. In Schistocerca gregaria (Desert locust), this protein is Opsin-1 (Lo1).